Here is a 392-residue protein sequence, read N- to C-terminus: Galactokinase (392 aa).

Alpha-D-galactose contacts are provided by R37, E43, H44, and D46. ATP contacts are provided by G136, G138, S140, and S141. Position 186 (D186) interacts with alpha-D-galactose. The active-site Proton acceptor is D186. Phosphoserine is present on S230. Y236 provides a ligand contact to alpha-D-galactose.

It belongs to the GHMP kinase family. GalK subfamily. Homodimer.

It carries out the reaction alpha-D-galactose + ATP = alpha-D-galactose 1-phosphate + ADP + H(+). The protein operates within carbohydrate metabolism; galactose metabolism. Functionally, catalyzes the transfer of a phosphate from ATP to alpha-D-galactose and participates in the first committed step in the catabolism of galactose. The sequence is that of Galactokinase from Homo sapiens (Human).